We begin with the raw amino-acid sequence, 382 residues long: Chaperone protein DnaJ (382 aa).

One can recognise a J domain in the interval 5–70 (DYYEVLGLQK…QKRAAYDQYG (66 aa)). Residues 134–212 (GTTKDIQINT…CHGEGRVHKK (79 aa)) form a CR-type zinc finger. The Zn(2+) site is built by Cys147, Cys150, Cys164, Cys167, Cys186, Cys189, Cys200, and Cys203. CXXCXGXG motif repeat units follow at residues 147–154 (CDSCGGSG), 164–171 (CPHCHGSG), 186–193 (CPTCHGSG), and 200–207 (CRNCHGEG).

This sequence belongs to the DnaJ family. In terms of assembly, homodimer. It depends on Zn(2+) as a cofactor.

It localises to the cytoplasm. Its function is as follows. Participates actively in the response to hyperosmotic and heat shock by preventing the aggregation of stress-denatured proteins and by disaggregating proteins, also in an autonomous, DnaK-independent fashion. Unfolded proteins bind initially to DnaJ; upon interaction with the DnaJ-bound protein, DnaK hydrolyzes its bound ATP, resulting in the formation of a stable complex. GrpE releases ADP from DnaK; ATP binding to DnaK triggers the release of the substrate protein, thus completing the reaction cycle. Several rounds of ATP-dependent interactions between DnaJ, DnaK and GrpE are required for fully efficient folding. Also involved, together with DnaK and GrpE, in the DNA replication of plasmids through activation of initiation proteins. In Haemophilus influenzae (strain ATCC 51907 / DSM 11121 / KW20 / Rd), this protein is Chaperone protein DnaJ.